We begin with the raw amino-acid sequence, 143 residues long: Ribulose bisphosphate carboxylase large chain (143 aa).

Positions 1–2 are excised as a propeptide; sequence MS. The residue at position 3 (Pro-3) is an N-acetylproline. Position 14 is an N6,N6,N6-trimethyllysine (Lys-14). Substrate is bound at residue Xaa-123.

It belongs to the RuBisCO large chain family. Type I subfamily. Heterohexadecamer of 8 large chains and 8 small chains.

It localises to the plastid. The protein localises to the chloroplast. The catalysed reaction is 2 (2R)-3-phosphoglycerate + 2 H(+) = D-ribulose 1,5-bisphosphate + CO2 + H2O. It catalyses the reaction D-ribulose 1,5-bisphosphate + O2 = 2-phosphoglycolate + (2R)-3-phosphoglycerate + 2 H(+). RuBisCO catalyzes two reactions: the carboxylation of D-ribulose 1,5-bisphosphate, the primary event in carbon dioxide fixation, as well as the oxidative fragmentation of the pentose substrate in the photorespiration process. Both reactions occur simultaneously and in competition at the same active site. The sequence is that of Ribulose bisphosphate carboxylase large chain (rbcL) from Nemopanthus mucronatus (Catberry).